A 356-amino-acid chain; its full sequence is tRNA N6-adenosine threonylcarbamoyltransferase (356 aa).

The Fe cation site is built by histidine 115 and histidine 119. Residues 138–142 (LVSGG), aspartate 171, glycine 184, and asparagine 283 contribute to the substrate site. Residue aspartate 311 participates in Fe cation binding.

It belongs to the KAE1 / TsaD family. It depends on Fe(2+) as a cofactor.

The protein localises to the cytoplasm. The enzyme catalyses L-threonylcarbamoyladenylate + adenosine(37) in tRNA = N(6)-L-threonylcarbamoyladenosine(37) in tRNA + AMP + H(+). Its function is as follows. Required for the formation of a threonylcarbamoyl group on adenosine at position 37 (t(6)A37) in tRNAs that read codons beginning with adenine. Is involved in the transfer of the threonylcarbamoyl moiety of threonylcarbamoyl-AMP (TC-AMP) to the N6 group of A37, together with TsaE and TsaB. TsaD likely plays a direct catalytic role in this reaction. This chain is tRNA N6-adenosine threonylcarbamoyltransferase, found in Prochlorococcus marinus (strain MIT 9312).